The sequence spans 252 residues: ATP synthase subunit a (252 aa).

The next 6 membrane-spanning stretches (helical) occupy residues 29–49 (FTNV…FLFI), 87–107 (FFPL…IGLF), 117–137 (IMIT…CGFY), 146–166 (LFVP…IEVI), 196–216 (FIVS…LPLI), and 219–239 (VAIT…FTVL).

The protein belongs to the ATPase A chain family. As to quaternary structure, F-type ATPases have 2 components, CF(1) - the catalytic core - and CF(0) - the membrane proton channel. CF(1) has five subunits: alpha(3), beta(3), gamma(1), delta(1), epsilon(1). CF(0) has three main subunits: a(1), b(2) and c(9-12). The alpha and beta chains form an alternating ring which encloses part of the gamma chain. CF(1) is attached to CF(0) by a central stalk formed by the gamma and epsilon chains, while a peripheral stalk is formed by the delta and b chains.

It localises to the cell inner membrane. Its function is as follows. Key component of the proton channel; it plays a direct role in the translocation of protons across the membrane. This Bartonella bacilliformis (strain ATCC 35685 / KC583 / Herrer 020/F12,63) protein is ATP synthase subunit a.